The chain runs to 196 residues: Ribonuclease HII (196 aa).

Positions 4-196 constitute an RNase H type-2 domain; it reads IWVCGVDEAG…PVRRVLEGSF (193 aa). A divalent metal cation contacts are provided by D10, E11, and D106.

The protein belongs to the RNase HII family. Requires Mn(2+) as cofactor. Mg(2+) is required as a cofactor.

It localises to the cytoplasm. The enzyme catalyses Endonucleolytic cleavage to 5'-phosphomonoester.. Endonuclease that specifically degrades the RNA of RNA-DNA hybrids. This Polynucleobacter asymbioticus (strain DSM 18221 / CIP 109841 / QLW-P1DMWA-1) (Polynucleobacter necessarius subsp. asymbioticus) protein is Ribonuclease HII.